We begin with the raw amino-acid sequence, 447 residues long: C4-dicarboxylate transport protein (447 aa).

8 helical membrane-spanning segments follow: residues isoleucine 19 to proline 39, leucine 55 to leucine 75, isoleucine 90 to valine 110, alanine 155 to leucine 175, leucine 199 to isoleucine 219, methionine 232 to valine 252, leucine 343 to isoleucine 363, and alanine 366 to valine 386.

The protein belongs to the dicarboxylate/amino acid:cation symporter (DAACS) (TC 2.A.23) family.

Its subcellular location is the cell inner membrane. In terms of biological role, responsible for the transport of dicarboxylates such as succinate, fumarate, and malate from the periplasm across the membrane. This chain is C4-dicarboxylate transport protein, found in Rhodospirillum rubrum (strain ATCC 11170 / ATH 1.1.1 / DSM 467 / LMG 4362 / NCIMB 8255 / S1).